The following is a 510-amino-acid chain: DAP3-binding cell death enhancer 1 (510 aa).

The N-terminal 23 residues, 1 to 23 (MWRLTGILGRALPRLLGPGFRGI), are a transit peptide targeting the mitochondrion. Disordered regions lie at residues 19–61 (GFRG…SRDP) and 142–185 (VLPR…SGLL). Positions 24–101 (TPKPTSSDGS…AVLALHLARQ (78 aa)) are cleaved as a propeptide — extended MTS. A compositionally biased stretch (low complexity) spans 35–45 (TTSPTLPLTRL). Composition is skewed to basic and acidic residues over residues 46–61 (SFDR…SRDP) and 155–167 (GLRE…EDHP). Residues 169–181 (APSQCLPSDSSLR) are compositionally biased toward polar residues. 7 TPR repeats span residues 213-245 (AHPP…QLSV), 246-278 (AITF…RGYS), 279-313 (KAQY…VQGH), 314-351 (SLAQ…DSGL), 352-385 (TEAQ…SNGD), 386-423 (SQSR…GNEP), and 471-499 (ASST…TIPS). The SIFI-degron signature appears at 307-326 (LAAVQGHSLAQYRYARCLLQ).

This sequence belongs to the DELE1 family. In terms of assembly, interacts with DAP3. As to quaternary structure, interacts (via TPR repeats) with EIF2AK1/HRI; activating the protein kinase activity of EIF2AK1/HRI, thereby promoting the integrated stress response (ISR). Homooctamer; oligomerization is required to activate EIF2AK1/HRI. Interacts (via TPR repeats) with EIF2AK1/HRI; activating the protein kinase activity of EIF2AK1/HRI, thereby promoting the integrated stress response (ISR). Post-translationally, unstable protein in absence of stress: imported in the mitochondrial matrix following processing by the mitochondrial-processing peptidase (MPP), where it is degraded by LONP1. Stabilized in response to iron deficiency: iron deficiency impairs mitochondrial import, promoting localization at the mitochondrial surface and stabilization. Cleaved by OMA1 in response to mitochondrial stress, generating the DAP3-binding cell death enhancer 1 short form (DELE1(S) or S-DELE1) that accumulates in the cytosol and activates the protein kinase activity of EIF2AK1/HRI. Protein cleavage by OMA1 can take place at different positions, and apparently does not require a specific sequence motif. Ubiquitinated and degraded by the SIFI complex once the mitochondrial stress has been resolved, thereby providing stress response silencing. Within the SIFI complex, UBR4 initiates ubiquitin chain that are further elongated or branched by KCMF1.

It localises to the mitochondrion. The protein localises to the mitochondrion outer membrane. Its subcellular location is the mitochondrion inner membrane. It is found in the cytoplasm. The protein resides in the cytosol. In terms of biological role, protein kinase activator that acts as a key activator of the integrated stress response (ISR) following various stresses, such as iron deficiency, mitochondrial stress or mitochondrial DNA breaks. Detects impaired protein import and processing in mitochondria, activating the ISR. May also required for the induction of death receptor-mediated apoptosis through the regulation of caspase activation. Protein kinase activator that activates the ISR in response to iron deficiency: iron deficiency impairs mitochondrial import, promoting DELE1 localization at the mitochondrial surface, where it binds and activates EIF2AK1/HRI to trigger the ISR. Functionally, protein kinase activator generated by protein cleavage in response to mitochondrial stress, which accumulates in the cytosol and specifically binds to and activates the protein kinase activity of EIF2AK1/HRI. It thereby activates the integrated stress response (ISR): EIF2AK1/HRI activation promotes eIF-2-alpha (EIF2S1) phosphorylation, leading to a decrease in global protein synthesis and the induction of selected genes, including the transcription factor ATF4, the master transcriptional regulator of the ISR. Also acts as an activator of PRKN-independent mitophagy: activates the protein kinase activity of EIF2AK1/HRI in response to mitochondrial damage, promoting eIF-2-alpha (EIF2S1) phosphorylation, leading to mitochondrial localization of EIF2S1 followed by induction of mitophagy. This chain is DAP3-binding cell death enhancer 1, found in Mus musculus (Mouse).